Here is a 333-residue protein sequence, read N- to C-terminus: L-lactate dehydrogenase B chain (333 aa).

NAD(+)-binding positions include 29–57 and Arg99; that span reads GQVG…LEDK. Substrate is bound by residues Arg106, Asn138, and Arg169. Asn138 lines the NAD(+) pocket. His193 functions as the Proton acceptor in the catalytic mechanism. Thr248 is a binding site for substrate.

It belongs to the LDH/MDH superfamily. LDH family. In terms of assembly, homotetramer.

It localises to the cytoplasm. The enzyme catalyses (S)-lactate + NAD(+) = pyruvate + NADH + H(+). The protein operates within fermentation; pyruvate fermentation to lactate; (S)-lactate from pyruvate: step 1/1. In terms of biological role, interconverts simultaneously and stereospecifically pyruvate and lactate with concomitant interconversion of NADH and NAD(+). The polypeptide is L-lactate dehydrogenase B chain (LDHB) (Gallus gallus (Chicken)).